The sequence spans 479 residues: MNFETIIGLEVHVELNTNSKIFSPSSAHFGEDPNANTNVIDWSFPGVLPVMNKGVIDAGIKAALALNMDIHKEMHFDRKNYFYPDNPKAYQISQFDEPIGYNGWIEIKLEDGSTKKIRIERAHLEEDAGKNTHGTDGYSYVDLNRQGVPLIEIVSEADMRSPEEAYAYLTALKEIIQYTGISDVKMEEGSMRVDANISLRPYGQEQFGTKTELKNLNSFSNVRKGLEFEVERQAKLLRSGGVIRQETRRYDEANKGTILMRVKEGAADYRYFPEPDLPLYEIDDAWIDEMRAQLPQFPAQRRAKYEEELGLSAYDASQLTATKALSDFFETAVSLGGDAKQVSNWLQGEVAQFLNAEGKTIEEIRLTPDNLVEMIAIIADGTISSKMAKKVFVHLAKNGGSARAYVEKAGLVQISDPAVLVPIIHQVFADNEAAVADFKSGKRNADKAFTGFLMKATKGQANPQVAQQLLAQELQKLRD.

The protein belongs to the GatB/GatE family. GatB subfamily. In terms of assembly, heterotrimer of A, B and C subunits.

The enzyme catalyses L-glutamyl-tRNA(Gln) + L-glutamine + ATP + H2O = L-glutaminyl-tRNA(Gln) + L-glutamate + ADP + phosphate + H(+). The catalysed reaction is L-aspartyl-tRNA(Asn) + L-glutamine + ATP + H2O = L-asparaginyl-tRNA(Asn) + L-glutamate + ADP + phosphate + 2 H(+). Its function is as follows. Allows the formation of correctly charged Asn-tRNA(Asn) or Gln-tRNA(Gln) through the transamidation of misacylated Asp-tRNA(Asn) or Glu-tRNA(Gln) in organisms which lack either or both of asparaginyl-tRNA or glutaminyl-tRNA synthetases. The reaction takes place in the presence of glutamine and ATP through an activated phospho-Asp-tRNA(Asn) or phospho-Glu-tRNA(Gln). The sequence is that of Aspartyl/glutamyl-tRNA(Asn/Gln) amidotransferase subunit B from Streptococcus pyogenes serotype M28 (strain MGAS6180).